The primary structure comprises 391 residues: Paired box protein Pax-5 (391 aa).

The tract at residues 1 to 21 (MDLEKNYPTPRTSRTGHGGVN) is disordered. The paired DNA-binding region spans 16–142 (GHGGVNQLGG…SSINRIIRTK (127 aa)). Residues 19–75 (GVNQLGGVFVNGRPLPDVVRQRIVELAHQGVRPCDISRQLRVSHGCVSKILGRYYET) form a PAI subdomain region. Residues 94–142 (KVVEKIAEYKRQNPTMFAWEIRDRLLAERVCDNDTVPSVSSINRIIRTK) form an RED subdomain region. The interval 182 to 218 (SGILGITSPSADTNKRKRDEGIQESPVPNGHSLPGRD) is disordered.

As to quaternary structure, interacts with ETS1; this interaction alters PAX5 DNA-binding properties. Binds DNA as a monomer. Interacts with TBP; this interaction allows PAX5 to interact with the basal transcription machinery. Interacts with RB1. Interacts with TLE4. Interacts with DAXX. In terms of assembly, (Microbial infection) Interacts (via N-terminus) with Epstein-Barr virus protein BZLF1 (via C-terminus); this interaction inhibits BZLF1-mediated lytic viral reactivation. Interacts also with EBNA1; this interaction promotes EBNA1-dependent transcription. In terms of processing, O-glycosylated. Phosphorylated by SYK. This phosphorylation plays an important role in the abolition of BLIMP1 repression by PAX5 in order to trigger plasma cell differentiation.

It is found in the nucleus. Transcription factor that plays an essential role in commitment of lymphoid progenitors to the B-lymphocyte lineage. Fulfills a dual role by repressing B-lineage inappropriate genes and simultaneously activating B-lineage-specific genes. In turn, regulates cell adhesion and migration, induces V(H)-to-D(H)J(H) recombination, facilitates pre-B-cell receptor signaling and promotes development to the mature B-cell stage. Repression of the cohesin-release factor WAPL causes global changes of the chromosomal architecture in pro-B cells to facilitate the generation of a diverse antibody repertoire. In terms of biological role, (Microbial infection) Plays an essential role in the maintenance of Epstein-Barr virus genome copy number within the host cell by promoting EBNA1/oriP-dependent binding and transcription. Also participates in the inhibition of lytic EBV reactivation by modulating viral BZLF1 activity. The protein is Paired box protein Pax-5 (PAX5) of Homo sapiens (Human).